A 459-amino-acid chain; its full sequence is MTLTQFGGLFVVYLISLVFILTLTYQEFRRVRFNFNIFFSLLYLLTFYFGFPLTCLLVFQFDVEVVPVDALLHALLASTCFYGIYYVSYKTRLRKPSMQPKAPVFTMNRVETNFTWLLLASVAVVTVGLFFMQNGFLLFKLQSYSQIFSSQVSGVALKRFFYFFIPAMLVVYFLKPTQLRWLFFLISTVAFGILTYVVVGGTRANIIIAFALFLFIGIVRGWITLWMLVTAGAIGIVGMFWLALKRYSLDVSGAEAFYTFLYLTRDTFSPWENFALLLNNYDKIDFQGLAPIIRDFYVFIPSWLWPGRPDAVLNSANYFTWEVLDNHSGLAISPTLIGSLVVMGGVLFIPVGAIVVGLIIKWFDWIYELGKQETNRYKAAILQAFCFGAIFNMIVLAREGVDSFVSRVVFFCIIFGLCLVIAKLLYWLFESAGLIRMYLTGNRVVSQKCPLQCEERKWS.

Helical transmembrane passes span 3–23 (LTQF…ILTL), 37–57 (IFFS…TCLL), 65–85 (VVPV…YGIY), 119–139 (LASV…FLLF), 154–174 (GVAL…VYFL), 181–201 (WLFF…VVGG), 206–226 (IIIA…ITLW), 227–247 (MLVT…LKRY), 340–360 (LVVM…GLII), 377–397 (YKAA…IVLA), and 409–429 (VFFC…YWLF).

It belongs to the WzyE family. As to quaternary structure, probably part of a complex composed of WzxE, WzyE and WzzE.

It is found in the cell inner membrane. It functions in the pathway bacterial outer membrane biogenesis; enterobacterial common antigen biosynthesis. Probably involved in the polymerization of enterobacterial common antigen (ECA) trisaccharide repeat units. This chain is Probable ECA polymerase, found in Photorhabdus laumondii subsp. laumondii (strain DSM 15139 / CIP 105565 / TT01) (Photorhabdus luminescens subsp. laumondii).